A 182-amino-acid chain; its full sequence is MQTDYAEVVRRTIRSVPDWPVPGVTFRDITPVLQDPRTFRALVDLFVYRYMRQRLDLVAGVDARGFILGSVLAYELNLGFVPVRKKGKLPYRTVAEEYSLEYGNATVEIHTDAVRTGQRVLLVDDLIATGGTMVAAIKLLQRLGANVVEAAAIIDLPYIGGSQHIAETGTPLYTVCQFSATD.

The protein belongs to the purine/pyrimidine phosphoribosyltransferase family. Homodimer.

Its subcellular location is the cytoplasm. It carries out the reaction AMP + diphosphate = 5-phospho-alpha-D-ribose 1-diphosphate + adenine. The protein operates within purine metabolism; AMP biosynthesis via salvage pathway; AMP from adenine: step 1/1. Its function is as follows. Catalyzes a salvage reaction resulting in the formation of AMP, that is energically less costly than de novo synthesis. The protein is Adenine phosphoribosyltransferase of Bordetella avium (strain 197N).